Here is a 310-residue protein sequence, read N- to C-terminus: tRNA dimethylallyltransferase (310 aa).

13–20 contributes to the ATP binding site; sequence GPTASGKT. 15-20 is a binding site for substrate; it reads TASGKT. Interaction with substrate tRNA regions lie at residues 38-41, 162-166, 243-248, and 276-283; these read DSAL, QRLSR, RCVGYR, and KRQITWLR.

It belongs to the IPP transferase family. As to quaternary structure, monomer. Requires Mg(2+) as cofactor.

It carries out the reaction adenosine(37) in tRNA + dimethylallyl diphosphate = N(6)-dimethylallyladenosine(37) in tRNA + diphosphate. In terms of biological role, catalyzes the transfer of a dimethylallyl group onto the adenine at position 37 in tRNAs that read codons beginning with uridine, leading to the formation of N6-(dimethylallyl)adenosine (i(6)A). The chain is tRNA dimethylallyltransferase from Aliivibrio fischeri (strain MJ11) (Vibrio fischeri).